The following is a 464-amino-acid chain: Cysteine--tRNA ligase (464 aa).

A Zn(2+)-binding site is contributed by C32. Positions 34-44 (VTVYDDCHIGH) match the 'HIGH' region motif. Zn(2+) is bound by residues C213, H238, and E242. A 'KMSKS' region motif is present at residues 270–274 (KMSKS). Residue K273 coordinates ATP.

This sequence belongs to the class-I aminoacyl-tRNA synthetase family. Monomer. The cofactor is Zn(2+).

The protein resides in the cytoplasm. The catalysed reaction is tRNA(Cys) + L-cysteine + ATP = L-cysteinyl-tRNA(Cys) + AMP + diphosphate. This Francisella tularensis subsp. holarctica (strain LVS) protein is Cysteine--tRNA ligase.